A 349-amino-acid chain; its full sequence is ATP synthase subunit a-2 (349 aa).

A propeptide spanning residues 1–97 (MERLTRLNHF…SNYMKLMEIP (97 aa)) is cleaved from the precursor. Helical transmembrane passes span 118 to 138 (FSFT…LLLI), 184 to 204 (FFPC…QGMI), 213 to 233 (HFLI…IVGF), 240 to 260 (FFSF…LVLL), 280 to 300 (MMAG…MLCM), 303 to 323 (IFYF…TGLE), and 326 to 346 (VAIL…NDAI).

The protein belongs to the ATPase A chain family. As to quaternary structure, F-type ATPases have 2 components, CF(1) - the catalytic core - and CF(0) - the membrane proton channel. CF(1) has five subunits: alpha(3), beta(3), gamma(1), delta(1), epsilon(1). CF(0) has three main subunits: a, b and c.

It is found in the mitochondrion inner membrane. In terms of biological role, mitochondrial membrane ATP synthase (F(1)F(0) ATP synthase or Complex V) produces ATP from ADP in the presence of a proton gradient across the membrane which is generated by electron transport complexes of the respiratory chain. F-type ATPases consist of two structural domains, F(1) - containing the extramembraneous catalytic core and F(0) - containing the membrane proton channel, linked together by a central stalk and a peripheral stalk. During catalysis, ATP synthesis in the catalytic domain of F(1) is coupled via a rotary mechanism of the central stalk subunits to proton translocation. Key component of the proton channel; it may play a direct role in the translocation of protons across the membrane. This is ATP synthase subunit a-2 (ATP6-2) from Arabidopsis thaliana (Mouse-ear cress).